The primary structure comprises 86 residues: MAHQAHSYHMVDPSPWPIFGAAAALLTTSGLVMWFHYNSSILLAAGLLSMLLVMLQWWREIVRESTFQGHHTPTVQKGLRYGMILF.

Residues 1 to 15 (MAHQAHSYHMVDPSP) are Mitochondrial matrix-facing. A helical membrane pass occupies residues 16-34 (WPIFGAAAALLTTSGLVMW). Over 35-40 (FHYNSS) the chain is Mitochondrial intermembrane. Residues 41–66 (ILLAAGLLSMLLVMLQWWREIVREST) form a helical membrane-spanning segment. Over 67 to 86 (FQGHHTPTVQKGLRYGMILF) the chain is Mitochondrial matrix.

Belongs to the cytochrome c oxidase subunit 3 family. As to quaternary structure, component of the cytochrome c oxidase (complex IV, CIV), a multisubunit enzyme composed of 14 subunits. The complex is composed of a catalytic core of 3 subunits MT-CO1, MT-CO2 and MT-CO3, encoded in the mitochondrial DNA, and 11 supernumerary subunits COX4I, COX5A, COX5B, COX6A, COX6B, COX6C, COX7A, COX7B, COX7C, COX8 and NDUFA4, which are encoded in the nuclear genome. The complex exists as a monomer or a dimer and forms supercomplexes (SCs) in the inner mitochondrial membrane with NADH-ubiquinone oxidoreductase (complex I, CI) and ubiquinol-cytochrome c oxidoreductase (cytochrome b-c1 complex, complex III, CIII), resulting in different assemblies (supercomplex SCI(1)III(2)IV(1) and megacomplex MCI(2)III(2)IV(2)).

The protein resides in the mitochondrion inner membrane. It catalyses the reaction 4 Fe(II)-[cytochrome c] + O2 + 8 H(+)(in) = 4 Fe(III)-[cytochrome c] + 2 H2O + 4 H(+)(out). In terms of biological role, component of the cytochrome c oxidase, the last enzyme in the mitochondrial electron transport chain which drives oxidative phosphorylation. The respiratory chain contains 3 multisubunit complexes succinate dehydrogenase (complex II, CII), ubiquinol-cytochrome c oxidoreductase (cytochrome b-c1 complex, complex III, CIII) and cytochrome c oxidase (complex IV, CIV), that cooperate to transfer electrons derived from NADH and succinate to molecular oxygen, creating an electrochemical gradient over the inner membrane that drives transmembrane transport and the ATP synthase. Cytochrome c oxidase is the component of the respiratory chain that catalyzes the reduction of oxygen to water. Electrons originating from reduced cytochrome c in the intermembrane space (IMS) are transferred via the dinuclear copper A center (CU(A)) of subunit 2 and heme A of subunit 1 to the active site in subunit 1, a binuclear center (BNC) formed by heme A3 and copper B (CU(B)). The BNC reduces molecular oxygen to 2 water molecules using 4 electrons from cytochrome c in the IMS and 4 protons from the mitochondrial matrix. The polypeptide is Cytochrome c oxidase subunit 3 (MT-CO3) (Anas platyrhynchos (Mallard)).